The primary structure comprises 171 residues: MNYFELFGLPIQFELDGSLLSSQFRALQKRFHPDNFATASERDRLMAVQQAAQINDAYQTLKDPLRRAEYLLSLQGIEMNAEQQTLQDPMFLMEQMELREELESVTACADPEAALVAFDTKVTAMQRHYLAQLQGQLAQSEWLAAADQIRKLKFIAKLKNEVERVEDQLLG.

Residues 2-74 (NYFELFGLPI…LRRAEYLLSL (73 aa)) enclose the J domain.

Belongs to the HscB family. Interacts with HscA and stimulates its ATPase activity.

Functionally, co-chaperone involved in the maturation of iron-sulfur cluster-containing proteins. Seems to help targeting proteins to be folded toward HscA. This is Co-chaperone protein HscB homolog from Vibrio cholerae serotype O1 (strain ATCC 39541 / Classical Ogawa 395 / O395).